The following is a 123-amino-acid chain: Alpha-lactalbumin (123 aa).

The region spanning 1–123 is the C-type lysozyme domain; the sequence is KQFTKCELSQ…KLEQWLCEEL (123 aa). 4 cysteine pairs are disulfide-bonded: Cys-6–Cys-120, Cys-28–Cys-111, Cys-61–Cys-77, and Cys-73–Cys-91. Lys-79, Asp-82, Asp-84, Asp-87, and Asp-88 together coordinate Ca(2+).

This sequence belongs to the glycosyl hydrolase 22 family. Lactose synthase (LS) is a heterodimer of a catalytic component, beta1,4-galactosyltransferase (beta4Gal-T1) and a regulatory component, alpha-lactalbumin (LA). As to expression, mammary gland specific. Secreted in milk.

Its subcellular location is the secreted. In terms of biological role, regulatory subunit of lactose synthase, changes the substrate specificity of galactosyltransferase in the mammary gland making glucose a good acceptor substrate for this enzyme. This enables LS to synthesize lactose, the major carbohydrate component of milk. In other tissues, galactosyltransferase transfers galactose onto the N-acetylglucosamine of the oligosaccharide chains in glycoproteins. This Equus asinus (Donkey) protein is Alpha-lactalbumin (LALBA).